We begin with the raw amino-acid sequence, 520 residues long: L-tyrosine:2-oxoglutarate aminotransferase amt1 (520 aa).

It belongs to the class-I pyridoxal-phosphate-dependent aminotransferase family. Pyridoxal 5'-phosphate serves as cofactor.

The enzyme catalyses L-tyrosine + 2-oxoglutarate = 3-(4-hydroxyphenyl)pyruvate + L-glutamate. Its pathway is secondary metabolite biosynthesis. An L-tyrosine:2-oxoglutarate aminotransferase (probably amt1) and atromentin synthetase nps3 catalyze consecutive steps to turn over L-tyrosine into atromentin, which represents the generic precursor molecule for the entire terphenylquinone and pulvinic acid family of pigments, which are widely distributed secondary metabolites in homobasidiomycetes. The first step catalyzed by amt1 converts L-tyrosine in to 4-hydroxyphenylpyruvate (4-HPP). Adenylation of two 4-HPP monomers by the nps3 adenylation (A) domain, covalent tethering of the monomers as a thioester and oxoester onto the nps3 thiolation (T) and thioesterase (TE) domains, respectively, and symmetric C-C-bond formation between two monomers catalyzed by the nps3 TE domain leads to atromentin. Follow-up products of atromentin in S.lacrymans include atromentic acid, xerocomic acid, isoxerocomic acid and variegatic acid. The chain is L-tyrosine:2-oxoglutarate aminotransferase amt1 (amt1) from Serpula lacrymans var. lacrymans (strain S7.9) (Dry rot fungus).